Reading from the N-terminus, the 300-residue chain is NAD kinase (300 aa).

Aspartate 78 serves as the catalytic Proton acceptor. Residues 78–79, 152–153, histidine 163, arginine 180, aspartate 182, and 193–198 contribute to the NAD(+) site; these read DG, ND, and TAYALS.

The protein belongs to the NAD kinase family. A divalent metal cation serves as cofactor.

The protein localises to the cytoplasm. The catalysed reaction is NAD(+) + ATP = ADP + NADP(+) + H(+). Its function is as follows. Involved in the regulation of the intracellular balance of NAD and NADP, and is a key enzyme in the biosynthesis of NADP. Catalyzes specifically the phosphorylation on 2'-hydroxyl of the adenosine moiety of NAD to yield NADP. The protein is NAD kinase of Alcanivorax borkumensis (strain ATCC 700651 / DSM 11573 / NCIMB 13689 / SK2).